We begin with the raw amino-acid sequence, 261 residues long: Pyridoxine 5'-phosphate synthase (261 aa).

3-amino-2-oxopropyl phosphate is bound at residue Asn6. 8-9 (DH) is a binding site for 1-deoxy-D-xylulose 5-phosphate. Residue Arg17 participates in 3-amino-2-oxopropyl phosphate binding. The Proton acceptor role is filled by His42. Positions 44 and 49 each coordinate 1-deoxy-D-xylulose 5-phosphate. Glu69 serves as the catalytic Proton acceptor. Residue Thr99 coordinates 1-deoxy-D-xylulose 5-phosphate. His213 (proton donor) is an active-site residue. Residues Gly214 and 235–236 (GQ) each bind 3-amino-2-oxopropyl phosphate.

The protein belongs to the PNP synthase family. As to quaternary structure, homooctamer; tetramer of dimers.

The protein localises to the cytoplasm. It carries out the reaction 3-amino-2-oxopropyl phosphate + 1-deoxy-D-xylulose 5-phosphate = pyridoxine 5'-phosphate + phosphate + 2 H2O + H(+). It participates in cofactor biosynthesis; pyridoxine 5'-phosphate biosynthesis; pyridoxine 5'-phosphate from D-erythrose 4-phosphate: step 5/5. Its function is as follows. Catalyzes the complicated ring closure reaction between the two acyclic compounds 1-deoxy-D-xylulose-5-phosphate (DXP) and 3-amino-2-oxopropyl phosphate (1-amino-acetone-3-phosphate or AAP) to form pyridoxine 5'-phosphate (PNP) and inorganic phosphate. The chain is Pyridoxine 5'-phosphate synthase from Aliarcobacter butzleri (strain RM4018) (Arcobacter butzleri).